A 261-amino-acid polypeptide reads, in one-letter code: Cytochrome c oxidase subunit 3 (261 aa).

Topologically, residues 1–15 are mitochondrial matrix; it reads MTHQTHAYHMVNPSP. Residues 16-34 traverse the membrane as a helical segment; it reads WPLTGALSALLMTSGLVMW. Topologically, residues 35–40 are mitochondrial intermembrane; that stretch reads FHYNST. The chain crosses the membrane as a helical span at residues 41-66; sequence LLLTLGLTTNLLTMYQWWRDIIREST. The Mitochondrial matrix segment spans residues 67–72; it reads FQGHHT. A helical membrane pass occupies residues 73-105; that stretch reads PAVQKGLRYGMILFIISEVFFFSGFFWAFYHSS. Residues 106 to 128 are Mitochondrial intermembrane-facing; it reads LAPTPELGGCWPPTGIHPLNPME. A helical membrane pass occupies residues 129-152; it reads VPLLNTSVLLASGVSITWAHHSLM. At 153-155 the chain is on the mitochondrial matrix side; that stretch reads EGN. Residues 156–183 form a helical membrane-spanning segment; that stretch reads RKHMLQALFITISLGIYFTLLQASEYYE. The Mitochondrial intermembrane segment spans residues 184–190; it reads APFTISD. The helical transmembrane segment at 191 to 223 threads the bilayer; the sequence is GVYGSTFFVATGFHGLHVIIGSTFLIVCFLRQL. Over 224 to 232 the chain is Mitochondrial matrix; the sequence is KFHFTSNHH. The chain crosses the membrane as a helical span at residues 233–256; sequence FGFEAAAWYWHFVDVVWLFLYVSI. Residues 257–261 lie on the Mitochondrial intermembrane side of the membrane; sequence YWWGS.

It belongs to the cytochrome c oxidase subunit 3 family. In terms of assembly, component of the cytochrome c oxidase (complex IV, CIV), a multisubunit enzyme composed of 14 subunits. The complex is composed of a catalytic core of 3 subunits MT-CO1, MT-CO2 and MT-CO3, encoded in the mitochondrial DNA, and 11 supernumerary subunits COX4I, COX5A, COX5B, COX6A, COX6B, COX6C, COX7A, COX7B, COX7C, COX8 and NDUFA4, which are encoded in the nuclear genome. The complex exists as a monomer or a dimer and forms supercomplexes (SCs) in the inner mitochondrial membrane with NADH-ubiquinone oxidoreductase (complex I, CI) and ubiquinol-cytochrome c oxidoreductase (cytochrome b-c1 complex, complex III, CIII), resulting in different assemblies (supercomplex SCI(1)III(2)IV(1) and megacomplex MCI(2)III(2)IV(2)).

The protein resides in the mitochondrion inner membrane. The catalysed reaction is 4 Fe(II)-[cytochrome c] + O2 + 8 H(+)(in) = 4 Fe(III)-[cytochrome c] + 2 H2O + 4 H(+)(out). Functionally, component of the cytochrome c oxidase, the last enzyme in the mitochondrial electron transport chain which drives oxidative phosphorylation. The respiratory chain contains 3 multisubunit complexes succinate dehydrogenase (complex II, CII), ubiquinol-cytochrome c oxidoreductase (cytochrome b-c1 complex, complex III, CIII) and cytochrome c oxidase (complex IV, CIV), that cooperate to transfer electrons derived from NADH and succinate to molecular oxygen, creating an electrochemical gradient over the inner membrane that drives transmembrane transport and the ATP synthase. Cytochrome c oxidase is the component of the respiratory chain that catalyzes the reduction of oxygen to water. Electrons originating from reduced cytochrome c in the intermembrane space (IMS) are transferred via the dinuclear copper A center (CU(A)) of subunit 2 and heme A of subunit 1 to the active site in subunit 1, a binuclear center (BNC) formed by heme A3 and copper B (CU(B)). The BNC reduces molecular oxygen to 2 water molecules using 4 electrons from cytochrome c in the IMS and 4 protons from the mitochondrial matrix. The protein is Cytochrome c oxidase subunit 3 (MT-CO3) of Rhinoceros unicornis (Greater Indian rhinoceros).